Here is a 139-residue protein sequence, read N- to C-terminus: uncharacterized protein (139 aa).

3 helical membrane passes run 38 to 60 (YFLH…LYVF), 72 to 94 (FIIL…CAGS), and 114 to 136 (ITVV…LIVA).

It is found in the cell membrane. This is an uncharacterized protein from Treponema pallidum (strain Nichols).